The sequence spans 401 residues: Nicotinate phosphoribosyltransferase (401 aa).

Histidine 221 bears the Phosphohistidine; by autocatalysis mark.

This sequence belongs to the NAPRTase family. In terms of processing, transiently phosphorylated on a His residue during the reaction cycle. Phosphorylation strongly increases the affinity for substrates and increases the rate of nicotinate D-ribonucleotide production. Dephosphorylation regenerates the low-affinity form of the enzyme, leading to product release.

The enzyme catalyses nicotinate + 5-phospho-alpha-D-ribose 1-diphosphate + ATP + H2O = nicotinate beta-D-ribonucleotide + ADP + phosphate + diphosphate. Its pathway is cofactor biosynthesis; NAD(+) biosynthesis; nicotinate D-ribonucleotide from nicotinate: step 1/1. Functionally, catalyzes the synthesis of beta-nicotinate D-ribonucleotide from nicotinate and 5-phospho-D-ribose 1-phosphate at the expense of ATP. In Pectobacterium carotovorum subsp. carotovorum (strain PC1), this protein is Nicotinate phosphoribosyltransferase.